Here is a 526-residue protein sequence, read N- to C-terminus: Thioredoxin reductase 2, mitochondrial (526 aa).

The N-terminal 36 residues, 1-36 (MAAIVAALRGSSGRFRPQTRVLTRGTRGAAGAASAA), are a transit peptide targeting the mitochondrion. 43 to 72 (DLLVIGGGSGGLACAKEAAQLGRKVAVADY) lines the FAD pocket. K81 carries the post-translational modification N6-succinyllysine. C88 and C93 are disulfide-bonded. An N6-succinyllysine mark is found at K177 and K331. The active-site Proton acceptor is the H499. Positions 524–525 (CU) form a cross-link, cysteinyl-selenocysteine (Cys-Sec). Residue U525 is a non-standard amino acid, selenocysteine.

Belongs to the class-I pyridine nucleotide-disulfide oxidoreductase family. Homodimer. FAD is required as a cofactor. Expressed in liver, kidney, adrenal gland and heart.

It localises to the mitochondrion. The catalysed reaction is [thioredoxin]-dithiol + NADP(+) = [thioredoxin]-disulfide + NADPH + H(+). Involved in the control of reactive oxygen species levels and the regulation of mitochondrial redox homeostasis. Maintains mitochondrial thioredoxin in a reduced state. May play a role in redox-regulated cell signaling. The polypeptide is Thioredoxin reductase 2, mitochondrial (Txnrd2) (Rattus norvegicus (Rat)).